Here is a 292-residue protein sequence, read N- to C-terminus: uncharacterized protein (292 aa).

The chain crosses the membrane as a helical span at residues 175-197 (VLNFYFTALPYAIDGIISGIGVF).

It is found in the membrane. This is an uncharacterized protein from Methanocaldococcus jannaschii (strain ATCC 43067 / DSM 2661 / JAL-1 / JCM 10045 / NBRC 100440) (Methanococcus jannaschii).